The primary structure comprises 372 residues: ATP phosphoribosyltransferase regulatory subunit (372 aa).

The protein belongs to the class-II aminoacyl-tRNA synthetase family. HisZ subfamily. In terms of assembly, heteromultimer composed of HisG and HisZ subunits.

Its subcellular location is the cytoplasm. Its pathway is amino-acid biosynthesis; L-histidine biosynthesis; L-histidine from 5-phospho-alpha-D-ribose 1-diphosphate: step 1/9. In terms of biological role, required for the first step of histidine biosynthesis. May allow the feedback regulation of ATP phosphoribosyltransferase activity by histidine. This chain is ATP phosphoribosyltransferase regulatory subunit, found in Allorhizobium ampelinum (strain ATCC BAA-846 / DSM 112012 / S4) (Agrobacterium vitis (strain S4)).